The chain runs to 359 residues: 5-amino-6-(D-ribitylamino)uracil--L-tyrosine 4-hydroxyphenyl transferase (359 aa).

One can recognise a Radical SAM core domain in the interval 45–282 (VTYVVNANIN…TYAVSRIFFK (238 aa)). [4Fe-4S] cluster-binding residues include C59, C63, and C66.

Belongs to the radical SAM superfamily. CofH family. As to quaternary structure, consists of two subunits, CofG and CofH. [4Fe-4S] cluster serves as cofactor.

The enzyme catalyses 5-amino-6-(D-ribitylamino)uracil + L-tyrosine + S-adenosyl-L-methionine = 5-amino-5-(4-hydroxybenzyl)-6-(D-ribitylimino)-5,6-dihydrouracil + 2-iminoacetate + 5'-deoxyadenosine + L-methionine + H(+). It participates in cofactor biosynthesis; coenzyme F0 biosynthesis. Catalyzes the radical-mediated synthesis of 5-amino-5-(4-hydroxybenzyl)-6-(D-ribitylimino)-5,6-dihydrouracil from 5-amino-6-(D-ribitylamino)uracil and L-tyrosine. This is 5-amino-6-(D-ribitylamino)uracil--L-tyrosine 4-hydroxyphenyl transferase from Methanococcus maripaludis (strain C6 / ATCC BAA-1332).